Here is a 225-residue protein sequence, read N- to C-terminus: 3-dehydroquinate dehydratase (225 aa).

3-dehydroquinate-binding positions include serine 6, glutamate 30–arginine 32, and arginine 62. Catalysis depends on histidine 118, which acts as the Proton donor/acceptor. Catalysis depends on lysine 143, which acts as the Schiff-base intermediate with substrate. Positions 186, 205, and 209 each coordinate 3-dehydroquinate.

It belongs to the type-I 3-dehydroquinase family. In terms of assembly, homodimer.

It carries out the reaction 3-dehydroquinate = 3-dehydroshikimate + H2O. It functions in the pathway metabolic intermediate biosynthesis; chorismate biosynthesis; chorismate from D-erythrose 4-phosphate and phosphoenolpyruvate: step 3/7. In terms of biological role, involved in the third step of the chorismate pathway, which leads to the biosynthesis of aromatic amino acids. Catalyzes the cis-dehydration of 3-dehydroquinate (DHQ) and introduces the first double bond of the aromatic ring to yield 3-dehydroshikimate. In Streptococcus pneumoniae (strain Taiwan19F-14), this protein is 3-dehydroquinate dehydratase.